The following is a 594-amino-acid chain: ATP-dependent RNA helicase DBP9 (594 aa).

Positions 17 to 45 match the Q motif motif; the sequence is TTFEAFHLDSRLLQAIKNIGFQYPTLIQS. The Helicase ATP-binding domain occupies 49–233; it reads PLALQQKRDI…QKFCRSPAIL (185 aa). Residue 62–69 participates in ATP binding; sequence AATGSGKT. The DEAD box motif lies at 179–182; that stretch reads DEVD. The region spanning 246–476 is the Helicase C-terminal domain; that stretch reads KLLQYYVKVS…PYKFDQKQVE (231 aa). Disordered regions lie at residues 339 to 377 and 558 to 594; these read EDDEIEEGHNTENQEEKSLEGEPENDKKPSKKKKVQVKK and TKVKFVPFHNAKKRHSHKKGRVSKPKNGKVDPLKNFK. Residues 345–366 are compositionally biased toward basic and acidic residues; it reads EGHNTENQEEKSLEGEPENDKK. Positions 567-584 are enriched in basic residues; that stretch reads NAKKRHSHKKGRVSKPKN. The span at 585 to 594 shows a compositional bias: basic and acidic residues; it reads GKVDPLKNFK.

Belongs to the DEAD box helicase family. DDX56/DBP9 subfamily. As to quaternary structure, interacts with DBP6.

Its subcellular location is the nucleus. It is found in the nucleolus. It carries out the reaction ATP + H2O = ADP + phosphate + H(+). Functionally, ATP-binding RNA helicase involved in the biogenesis of 60S ribosomal subunits and is required for the normal formation of 25S and 5.8S rRNAs. The protein is ATP-dependent RNA helicase DBP9 (DBP9) of Saccharomyces cerevisiae (strain YJM789) (Baker's yeast).